The following is a 414-amino-acid chain: Probable tRNA pseudouridine synthase D (414 aa).

Aspartate 90 serves as the catalytic Nucleophile. The TRUD domain occupies 162–382; that stretch reads GFPNFFGVQR…SSGDYRIISA (221 aa).

Belongs to the pseudouridine synthase TruD family.

The catalysed reaction is uridine(13) in tRNA = pseudouridine(13) in tRNA. Could be responsible for synthesis of pseudouridine from uracil-13 in transfer RNAs. The protein is Probable tRNA pseudouridine synthase D of Picrophilus torridus (strain ATCC 700027 / DSM 9790 / JCM 10055 / NBRC 100828 / KAW 2/3).